The primary structure comprises 126 residues: Bleomycin resistance protein (126 aa).

The VOC domain maps to 1–119 (MTDQATPNLP…DGTLLRLIQN (119 aa)).

It belongs to the bleomycin resistance protein family.

Functionally, binding protein with a strong affinity to the bleomycin family of antibiotics. Binds to CL990; an antimitotic-antibiotic compound. The polypeptide is Bleomycin resistance protein (ble) (Klebsiella pneumoniae).